A 286-amino-acid chain; its full sequence is Pantothenate synthetase (286 aa).

Residue 30-37 (MGNLHDGH) participates in ATP binding. The active-site Proton donor is His37. Gln61 lines the (R)-pantoate pocket. Residue Gln61 participates in beta-alanine binding. Position 148 to 151 (148 to 151 (GKKD)) interacts with ATP. (R)-pantoate is bound at residue Gln154. Residues Val177 and 185-188 (LSSR) each bind ATP.

This sequence belongs to the pantothenate synthetase family. In terms of assembly, homodimer.

It localises to the cytoplasm. The enzyme catalyses (R)-pantoate + beta-alanine + ATP = (R)-pantothenate + AMP + diphosphate + H(+). It functions in the pathway cofactor biosynthesis; (R)-pantothenate biosynthesis; (R)-pantothenate from (R)-pantoate and beta-alanine: step 1/1. Functionally, catalyzes the condensation of pantoate with beta-alanine in an ATP-dependent reaction via a pantoyl-adenylate intermediate. This is Pantothenate synthetase from Psychrobacter sp. (strain PRwf-1).